A 1338-amino-acid chain; its full sequence is Apoptotic chromatin condensation inducer in the nucleus (1338 aa).

The interval Met1–Arg57 is disordered. The SAP domain maps to Leu72 to Leu106. Ser132, Ser166, Ser169, Ser208, Ser210, and Ser216 each carry phosphoserine. Positions Glu155–Ile866 are disordered. Acidic residues predominate over residues Glu161–Asp171. The span at Glu219–Ser228 shows a compositional bias: basic and acidic residues. Ser242 bears the Phosphoserine mark. Thr253 is modified (phosphothreonine). A Glycyl lysine isopeptide (Lys-Gly) (interchain with G-Cter in SUMO1) cross-link involves residue Lys267. The segment covering Glu269 to Asp290 has biased composition (acidic residues). Position 295 is a phosphoserine (Ser295). Positions Glu313–Arg353 are enriched in basic and acidic residues. A Glycyl lysine isopeptide (Lys-Gly) (interchain with G-Cter in SUMO2) cross-link involves residue Lys318. Phosphoserine occurs at positions 332 and 369. Lys378 participates in a covalent cross-link: Glycyl lysine isopeptide (Lys-Gly) (interchain with G-Cter in SUMO2). A phosphoserine mark is found at Ser387, Ser389, Ser391, and Ser413. 2 positions are modified to phosphothreonine: Thr417 and Thr423. The span at Glu425–Gln434 shows a compositional bias: polar residues. Phosphoserine is present on residues Ser454, Ser477, Ser479, Ser491, and Ser497. Residues Gln506 to Gly518 show a composition bias toward polar residues. Positions Ile542–Arg559 are enriched in basic and acidic residues. Residue Ser561 is modified to Phosphoserine. Low complexity-rich tracts occupy residues Ser573 to Pro603 and Arg646 to Arg662. Lys654 carries the N6,N6,N6-trimethyllysine; by EHMT2; alternate modification. Lys654 bears the N6,N6-dimethyllysine; by EHMT2; alternate mark. Phosphoserine occurs at positions 655, 657, 710, and 729. A Glycyl lysine isopeptide (Lys-Gly) (interchain with G-Cter in SUMO2) cross-link involves residue Lys732. Residues Thr744–Ser754 show a composition bias toward polar residues. Composition is skewed to basic and acidic residues over residues Leu757–Glu767 and Asn798–Ser815. Residues Ser825 and Ser838 each carry the phosphoserine modification. Polar residues predominate over residues Thr855 to Ile866. Position 861 is an N6-acetyllysine; alternate (Lys861). Lys861 is covalently cross-linked (Glycyl lysine isopeptide (Lys-Gly) (interchain with G-Cter in SUMO2); alternate). A Glycyl lysine isopeptide (Lys-Gly) (interchain with G-Cter in SUMO2) cross-link involves residue Lys879. The segment covering Ala892–Leu915 has biased composition (basic and acidic residues). The tract at residues Ala892–Pro950 is disordered. A phosphoserine mark is found at Ser895 and Ser898. Over residues Glu936–Ala945 the composition is skewed to acidic residues. Lys969 participates in a covalent cross-link: Glycyl lysine isopeptide (Lys-Gly) (interchain with G-Cter in SUMO2). Thr975 carries the post-translational modification Phosphothreonine. Residues Ser986, Ser989, and Ser1003 each carry the phosphoserine modification. Residues Lys1046 and Lys1106 each participate in a glycyl lysine isopeptide (Lys-Gly) (interchain with G-Cter in SUMO2) cross-link. Disordered regions lie at residues Glu1104–Phe1214 and Leu1226–Arg1338. Pro residues predominate over residues Pro1115–His1129. A compositionally biased stretch (basic and acidic residues) spans Pro1130–Arg1174. Residues Ser1175–Glu1192 are compositionally biased toward basic residues. A Phosphoserine; by SRPK2 and PKB/AKT1 modification is found at Ser1179. Composition is skewed to basic and acidic residues over residues Lys1193–Phe1214 and Lys1236–Asp1317. The tract at residues Leu1209–Lys1236 is sufficient for interaction with RNPS1 and SAP18 and formation of the ASAP complex.

Found in a mRNA splicing-dependent exon junction complex (EJC). Component of the heterotrimeric ASAP (apoptosis- and splicing-associated protein) complexes consisting of RNPS1, SAP18 and different isoforms of ACIN1; the association of SAP18 seems to require a preformed RNPS1:ACIN1 complex. Interacts with API5. Interacts with SRPK2 in a phosphorylation-dependent manner. In terms of processing, undergoes proteolytic cleavage; the processed form is active, contrary to the uncleaved form. Phosphorylation on Ser-1179 by SRPK2 up-regulates its stimulatory effect on cyclin A1.

The protein localises to the nucleus. It localises to the nucleus speckle. It is found in the nucleoplasm. Auxiliary component of the splicing-dependent multiprotein exon junction complex (EJC) deposited at splice junction on mRNAs. The EJC is a dynamic structure consisting of core proteins and several peripheral nuclear and cytoplasmic associated factors that join the complex only transiently either during EJC assembly or during subsequent mRNA metabolism. Component of the ASAP complexes which bind RNA in a sequence-independent manner and are proposed to be recruited to the EJC prior to or during the splicing process and to regulate specific excision of introns in specific transcription subsets; ACIN1 confers RNA-binding to the complex. The ASAP complex can inhibit RNA processing during in vitro splicing reactions. The ASAP complex promotes apoptosis and is disassembled after induction of apoptosis. Involved in the splicing modulation of BCL2L1/Bcl-X (and probably other apoptotic genes); specifically inhibits formation of proapoptotic isoforms such as Bcl-X(S); the activity is different from the established EJC assembly and function. Induces apoptotic chromatin condensation after activation by CASP3. Regulates cyclin A1, but not cyclin A2, expression in leukemia cells. The sequence is that of Apoptotic chromatin condensation inducer in the nucleus (Acin1) from Mus musculus (Mouse).